Here is a 715-residue protein sequence, read N- to C-terminus: Interferon-induced GTP-binding protein Mx2 (715 aa).

A compositionally biased stretch (basic residues) spans 1 to 14 (MSKAHKSWPHRRRN). Disordered stretches follow at residues 1–24 (MSKAHKSWPHRRRNQFSSQRSLKK) and 69–88 (NNQPLPGNTSQPRAKGPENN). The segment covering 69-80 (NNQPLPGNTSQP) has biased composition (polar residues). The region spanning 115-387 (DLALPAIAVI…LITHIQKSLP (273 aa)) is the Dynamin-type G domain. Residues 125-132 (GDQSSGKS) are G1 motif. 125–132 (GDQSSGKS) is a GTP binding site. The interval 150–152 (VTR) is G2 motif. Residues 225 to 228 (DLPG) form a G3 motif region. GTP is bound by residues 225-229 (DLPGI) and 294-297 (TKPD). The interval 294-297 (TKPD) is G4 motif. Residues 326–329 (KCRG) are G5 motif. Residues 623-714 (FNEIGVHLNA…ALCQFSSKEI (92 aa)) form the GED domain.

Belongs to the TRAFAC class dynamin-like GTPase superfamily. Dynamin/Fzo/YdjA family.

The protein localises to the cytoplasm. The protein resides in the nucleus. Functionally, interferon-induced dynamin-like GTPase with antiviral activity. This Macaca mulatta (Rhesus macaque) protein is Interferon-induced GTP-binding protein Mx2 (MX2).